Here is a 209-residue protein sequence, read N- to C-terminus: Uridine kinase (209 aa).

Residue 16-23 coordinates ATP; sequence GGSGSGKT.

This sequence belongs to the uridine kinase family.

The protein localises to the cytoplasm. The catalysed reaction is uridine + ATP = UMP + ADP + H(+). The enzyme catalyses cytidine + ATP = CMP + ADP + H(+). The protein operates within pyrimidine metabolism; CTP biosynthesis via salvage pathway; CTP from cytidine: step 1/3. It participates in pyrimidine metabolism; UMP biosynthesis via salvage pathway; UMP from uridine: step 1/1. In Lactiplantibacillus plantarum (strain ATCC BAA-793 / NCIMB 8826 / WCFS1) (Lactobacillus plantarum), this protein is Uridine kinase.